A 322-amino-acid polypeptide reads, in one-letter code: ATP-dependent 6-phosphofructokinase (322 aa).

Residue Gly-11 participates in ATP binding. 21–25 (RAVVR) is an ADP binding site. ATP is bound by residues 72–73 (RC) and 102–105 (GDGS). Mg(2+) is bound at residue Asp-103. 127–129 (TID) lines the substrate pocket. Asp-129 functions as the Proton acceptor in the catalytic mechanism. Arg-156 provides a ligand contact to ADP. Residues Arg-164 and 171 to 173 (MGR) contribute to the substrate site. Residues 187–189 (GAE), Arg-213, and 215–217 (KKH) contribute to the ADP site. Substrate-binding positions include Glu-224, Arg-245, and 251–254 (HVQR).

The protein belongs to the phosphofructokinase type A (PFKA) family. ATP-dependent PFK group I subfamily. Prokaryotic clade 'B1' sub-subfamily. As to quaternary structure, homotetramer. It depends on Mg(2+) as a cofactor.

It is found in the cytoplasm. The catalysed reaction is beta-D-fructose 6-phosphate + ATP = beta-D-fructose 1,6-bisphosphate + ADP + H(+). It participates in carbohydrate degradation; glycolysis; D-glyceraldehyde 3-phosphate and glycerone phosphate from D-glucose: step 3/4. With respect to regulation, allosterically activated by ADP and other diphosphonucleosides, and allosterically inhibited by phosphoenolpyruvate. Functionally, catalyzes the phosphorylation of D-fructose 6-phosphate to fructose 1,6-bisphosphate by ATP, the first committing step of glycolysis. The sequence is that of ATP-dependent 6-phosphofructokinase from Staphylococcus aureus (strain JH1).